A 431-amino-acid polypeptide reads, in one-letter code: MSPSVEETTSVTESIMFAIVSFKHMGPFEGYSMSADRAASDLLIGMFGSVSLVNLLTIIGCLWVLRVTRPPVSVMIFTWNLVLSQFFSILATMLSKGIMLRGALNLSLCRLVLFVDDVGLYSTALFFLFLILDRLSAISYGRDLWHHETRENAGVALYAVAFAWVLSIVAAVPTAATGSLDYRWLGCQIPIQYAAVDLTIKMWFLLGAPMIAVLANVVELAYSDRRDHVWSYVGRVCTFYVTCLMLFVPYYCFRVLRGVLQPASAAGTGFGIMDYVELATRTLLTMRLGILPLFIIAFFSREPTKDLDDSFDYLVERCQQSCHGHFVRRLVQALKRAMYSVELAVCYFSTSVRDVAEAVKKSSSRCYADATSAAVVVTTTTSEKATLVEHAEGMASEMCPGTTIDVSAESSSVLCTDGENTVASDATVTAL.

2 helical membrane passes run 42–62 (LLIGMFGSVSLVNLLTIIGCL) and 74–94 (VMIFTWNLVLSQFFSILATML). An N-linked (GlcNAc...) asparagine; by host glycan is attached at asparagine 105. 5 helical membrane passes run 111–131 (LVLFVDDVGLYSTALFFLFLI), 153–173 (AGVALYAVAFAWVLSIVAAVP), 202–222 (MWFLLGAPMIAVLANVVELAY), 236–256 (VCTFYVTCLMLFVPYYCFRVL), and 279–299 (ATRTLLTMRLGILPLFIIAFF).

The protein resides in the membrane. This is an uncharacterized protein from Homo sapiens (Human).